A 941-amino-acid chain; its full sequence is Peroxisomal ATPase PEX6 (941 aa).

ATP contacts are provided by residues 384–391 (GIPGCGKR) and 698–705 (GPPGTGKT).

This sequence belongs to the AAA ATPase family. Interacts with PEX1; forming the PEX1-PEX6 AAA ATPase complex, which is composed of a heterohexamer formed by a trimer of PEX1-PEX6 dimers. Interacts with APME9.

It is found in the cytoplasm. Its subcellular location is the cytosol. The protein resides in the peroxisome membrane. It carries out the reaction ATP + H2O = ADP + phosphate + H(+). Functionally, component of the PEX1-PEX6 AAA ATPase complex, a protein dislocase complex that mediates the ATP-dependent extraction of the PEX5 receptor from peroxisomal membranes, an essential step for PEX5 recycling. Specifically recognizes PEX5 monoubiquitinated at 'Cys-11', and pulls it out of the peroxisome lumen through the PEX2-PEX10-PEX12 retrotranslocation channel. Extraction by the PEX1-PEX6 AAA ATPase complex is accompanied by unfolding of the TPR repeats and release of bound cargo from PEX5. Required for jasmonate biosynthesis. Necessary for the developmental elimination of obsolete peroxisome matix proteins. The sequence is that of Peroxisomal ATPase PEX6 from Arabidopsis thaliana (Mouse-ear cress).